A 431-amino-acid chain; its full sequence is Serine--tRNA ligase (431 aa).

An L-serine-binding site is contributed by 238-240 (TSE). 269 to 271 (RSE) contributes to the ATP binding site. Glu292 is an L-serine binding site. 356–359 (EISS) contributes to the ATP binding site. Residue Ser391 participates in L-serine binding.

The protein belongs to the class-II aminoacyl-tRNA synthetase family. Type-1 seryl-tRNA synthetase subfamily. As to quaternary structure, homodimer. The tRNA molecule binds across the dimer.

It is found in the cytoplasm. It carries out the reaction tRNA(Ser) + L-serine + ATP = L-seryl-tRNA(Ser) + AMP + diphosphate + H(+). It catalyses the reaction tRNA(Sec) + L-serine + ATP = L-seryl-tRNA(Sec) + AMP + diphosphate + H(+). Its pathway is aminoacyl-tRNA biosynthesis; selenocysteinyl-tRNA(Sec) biosynthesis; L-seryl-tRNA(Sec) from L-serine and tRNA(Sec): step 1/1. Catalyzes the attachment of serine to tRNA(Ser). Is also able to aminoacylate tRNA(Sec) with serine, to form the misacylated tRNA L-seryl-tRNA(Sec), which will be further converted into selenocysteinyl-tRNA(Sec). In Leptothrix cholodnii (strain ATCC 51168 / LMG 8142 / SP-6) (Leptothrix discophora (strain SP-6)), this protein is Serine--tRNA ligase.